We begin with the raw amino-acid sequence, 656 residues long: Receptor-type tyrosine-protein phosphatase R (656 aa).

Residues 1–23 (MRRAVGFPALCLLLNLHAAGCFS) form the signal peptide. The O-linked (Xyl...) (chondroitin sulfate) serine glycan is linked to S23. At 24–226 (RNNDHFLAIR…EADKIWSKEG (203 aa)) the chain is on the extracellular side. N128 carries an N-linked (GlcNAc...) asparagine glycan. The chain crosses the membrane as a helical span at residues 227–247 (FYAVVIFLSIFIIIVTCLMII). At 248 to 656 (YRLKERLQLS…ESRLSPETVE (409 aa)) the chain is on the cytoplasmic side. The tract at residues 269–289 (HLSPIARQQAQSEAKTTHSMV) is disordered. S271 is subject to Phosphoserine. Positions 274-289 (ARQQAQSEAKTTHSMV) are enriched in polar residues. S338 carries the post-translational modification Phosphoserine; by PKA. The Tyrosine-protein phosphatase domain maps to 392–646 (LQSEFMEIPM…EFVHHALCLF (255 aa)). Substrate is bound by residues D553, 587–593 (CSAGIGR), and Q631. The Phosphocysteine intermediate role is filled by C587.

This sequence belongs to the protein-tyrosine phosphatase family. Receptor class 7 subfamily. Interacts with MAPKs. As to expression, expressed in the heart, brain, spleen, lung, liver, skeletal muscle, kidney and testis. Isoform alpha is expressed throughout the granular layer of the cerebellar but not within the Purkinje cells, also in the villi of the ileum and jejunum and both the villi and crypts of the duodenum. Isoform beta is expressed only in the Purkinje cells. Isoform gamma is expressed throughout the brain, the villi and crypts of the duodenum, jejunum and ileum and expressed at low levels in the proximal colon.

The protein resides in the cell membrane. It localises to the cytoplasm. It carries out the reaction O-phospho-L-tyrosyl-[protein] + H2O = L-tyrosyl-[protein] + phosphate. In terms of biological role, sequesters mitogen-activated protein kinases (MAPKs) such as MAPK1, MAPK3 and MAPK14 in the cytoplasm in an inactive form. The MAPKs bind to a dephosphorylated kinase interacting motif, phosphorylation of which by the protein kinase A complex releases the MAPKs for activation and translocation into the nucleus. Isoform gamma may have a role in patterning and cellular proliferation of skeletal elements in the precartilaginous/cartilaginous skeleton. The sequence is that of Receptor-type tyrosine-protein phosphatase R (Ptprr) from Mus musculus (Mouse).